Consider the following 218-residue polypeptide: MTTIIDYGIGNLRSIEKAFETVGATVHRTDDPAAIAEAERLVLPGVGAFRACIDEIRRRDLEGPIHDAIGRGVPFLGVCVGMQLLFETGYEKGEHEGLGVLPGHVAHFRETDAGMPDELTVPHMGWNAIEPTRDHPLLDELGATPYVYFVHSYHPVAEDADDVLTTTSYGHTFPSVVQRDNVFGVQFHPEKSQAAGLGLLDNFAALPTTEEAGRTVST.

In terms of domain architecture, Glutamine amidotransferase type-1 spans 1–213 (MTTIIDYGIG…AALPTTEEAG (213 aa)). Cys-79 functions as the Nucleophile in the catalytic mechanism. Catalysis depends on residues His-188 and Glu-190.

Heterodimer of HisH and HisF.

The protein resides in the cytoplasm. The enzyme catalyses 5-[(5-phospho-1-deoxy-D-ribulos-1-ylimino)methylamino]-1-(5-phospho-beta-D-ribosyl)imidazole-4-carboxamide + L-glutamine = D-erythro-1-(imidazol-4-yl)glycerol 3-phosphate + 5-amino-1-(5-phospho-beta-D-ribosyl)imidazole-4-carboxamide + L-glutamate + H(+). It carries out the reaction L-glutamine + H2O = L-glutamate + NH4(+). It functions in the pathway amino-acid biosynthesis; L-histidine biosynthesis; L-histidine from 5-phospho-alpha-D-ribose 1-diphosphate: step 5/9. Its function is as follows. IGPS catalyzes the conversion of PRFAR and glutamine to IGP, AICAR and glutamate. The HisH subunit catalyzes the hydrolysis of glutamine to glutamate and ammonia as part of the synthesis of IGP and AICAR. The resulting ammonia molecule is channeled to the active site of HisF. This chain is Imidazole glycerol phosphate synthase subunit HisH, found in Salinibacter ruber (strain DSM 13855 / M31).